The primary structure comprises 519 residues: Alkaline phosphatase, tissue-nonspecific isozyme (519 aa).

The signal sequence occupies residues 1–16; that stretch reads MKAFLLTLLAQLCSAS. D59 provides a ligand contact to Mg(2+). The Zn(2+) site is built by D59 and S109. Catalysis depends on S109, which acts as the Phosphoserine intermediate. An intrachain disulfide couples C138 to C200. N139 carries an N-linked (GlcNAc...) asparagine glycan. T172 provides a ligand contact to Mg(2+). N-linked (GlcNAc...) asparagine glycosylation occurs at N229. Residue E234 coordinates Ca(2+). An N-linked (GlcNAc...) asparagine glycan is attached at N278. The Ca(2+) site is built by F289 and E290. N-linked (GlcNAc...) asparagine glycosylation occurs at N302. D305 provides a ligand contact to Ca(2+). E331 lines the Mg(2+) pocket. Residues D336, H340, D377, and H378 each coordinate Zn(2+). N-linked (GlcNAc...) asparagine glycosylation is present at N429. H453 contacts Zn(2+). C488 and C496 are joined by a disulfide. S498 carries the GPI-anchor amidated serine lipid modification. The propeptide at 499-519 is removed in mature form; sequence AARPAATATLLPVLLLLLLLC.

Belongs to the alkaline phosphatase family. Homodimer. Requires Mg(2+) as cofactor. The cofactor is Zn(2+). Ca(2+) serves as cofactor.

The protein localises to the cell membrane. Its subcellular location is the extracellular vesicle membrane. It carries out the reaction a phosphate monoester + H2O = an alcohol + phosphate. It catalyses the reaction diphosphate + H2O = 2 phosphate + H(+). The catalysed reaction is pyridoxal 5'-phosphate + H2O = pyridoxal + phosphate. The enzyme catalyses phosphoethanolamine + H2O = ethanolamine + phosphate. It carries out the reaction ATP + H2O = ADP + phosphate + H(+). It catalyses the reaction ADP + H2O = AMP + phosphate + H(+). The catalysed reaction is AMP + H2O = adenosine + phosphate. Alkaline phosphatase that metabolizes various phosphate compounds and plays a key role in skeletal mineralization and adaptive thermogenesis. Has broad substrate specificity and can hydrolyze a considerable variety of compounds: however, only a few substrates, such as diphosphate (inorganic pyrophosphate; PPi) and pyridoxal 5'-phosphate (PLP) are natural substrates. Plays an essential role in skeletal and dental mineralization via its ability to hydrolyze extracellular diphosphate, a potent mineralization inhibitor, to phosphate: it thereby promotes hydroxyapatite crystal formation and increases inorganic phosphate concentration. Catalyzes dephosphorylation of PLP to pyridoxal (PL), the transportable form of vitamin B6, in order to provide a sufficient amount of PLP in the brain, an essential cofactor for enzymes catalyzing the synthesis of diverse neurotransmitters. Additionally, also able to mediate ATP degradation in a stepwise manner to adenosine, thereby regulating the availability of ligands for purinergic receptors. Involved in the establishment and growth of feather germs. This is Alkaline phosphatase, tissue-nonspecific isozyme (ALPL) from Gallus gallus (Chicken).